The following is a 336-amino-acid chain: Glyceraldehyde-3-phosphate dehydrogenase 1 (336 aa).

Residues 12–13 (RI), aspartate 34, and serine 120 contribute to the NAD(+) site. D-glyceraldehyde 3-phosphate contacts are provided by residues 150–152 (SCT), threonine 181, arginine 198, 211–212 (TG), and arginine 234. The Nucleophile role is filled by cysteine 151. Asparagine 316 contacts NAD(+).

The protein belongs to the glyceraldehyde-3-phosphate dehydrogenase family. Homotetramer.

The protein localises to the cytoplasm. The catalysed reaction is D-glyceraldehyde 3-phosphate + phosphate + NAD(+) = (2R)-3-phospho-glyceroyl phosphate + NADH + H(+). It functions in the pathway carbohydrate degradation; glycolysis; pyruvate from D-glyceraldehyde 3-phosphate: step 1/5. Functionally, catalyzes the oxidative phosphorylation of glyceraldehyde 3-phosphate (G3P) to 1,3-bisphosphoglycerate (BPG) using the cofactor NAD. The first reaction step involves the formation of a hemiacetal intermediate between G3P and a cysteine residue, and this hemiacetal intermediate is then oxidized to a thioester, with concomitant reduction of NAD to NADH. The reduced NADH is then exchanged with the second NAD, and the thioester is attacked by a nucleophilic inorganic phosphate to produce BPG. The protein is Glyceraldehyde-3-phosphate dehydrogenase 1 (gapA1) of Staphylococcus epidermidis (strain ATCC 35984 / DSM 28319 / BCRC 17069 / CCUG 31568 / BM 3577 / RP62A).